The chain runs to 200 residues: Recombination protein RecR (200 aa).

A C4-type zinc finger spans residues cysteine 58–cysteine 73. In terms of domain architecture, Toprim spans serine 81–serine 177.

This sequence belongs to the RecR family.

May play a role in DNA repair. It seems to be involved in an RecBC-independent recombinational process of DNA repair. It may act with RecF and RecO. The protein is Recombination protein RecR of Limosilactobacillus reuteri (strain DSM 20016) (Lactobacillus reuteri).